The following is a 364-amino-acid chain: tRNA 2-selenouridine synthase (364 aa).

The 124-residue stretch at 14–137 (LIADTPIIDV…LRQTAIQATI (124 aa)) folds into the Rhodanese domain. Cys-97 serves as the catalytic S-selanylcysteine intermediate.

This sequence belongs to the SelU family. As to quaternary structure, monomer.

The enzyme catalyses 5-methylaminomethyl-2-thiouridine(34) in tRNA + selenophosphate + (2E)-geranyl diphosphate + H2O + H(+) = 5-methylaminomethyl-2-selenouridine(34) in tRNA + (2E)-thiogeraniol + phosphate + diphosphate. It carries out the reaction 5-methylaminomethyl-2-thiouridine(34) in tRNA + (2E)-geranyl diphosphate = 5-methylaminomethyl-S-(2E)-geranyl-thiouridine(34) in tRNA + diphosphate. It catalyses the reaction 5-methylaminomethyl-S-(2E)-geranyl-thiouridine(34) in tRNA + selenophosphate + H(+) = 5-methylaminomethyl-2-(Se-phospho)selenouridine(34) in tRNA + (2E)-thiogeraniol. The catalysed reaction is 5-methylaminomethyl-2-(Se-phospho)selenouridine(34) in tRNA + H2O = 5-methylaminomethyl-2-selenouridine(34) in tRNA + phosphate. Involved in the post-transcriptional modification of the uridine at the wobble position (U34) of tRNA(Lys), tRNA(Glu) and tRNA(Gln). Catalyzes the conversion of 2-thiouridine (S2U-RNA) to 2-selenouridine (Se2U-RNA). Acts in a two-step process involving geranylation of 2-thiouridine (S2U) to S-geranyl-2-thiouridine (geS2U) and subsequent selenation of the latter derivative to 2-selenouridine (Se2U) in the tRNA chain. In Escherichia coli O17:K52:H18 (strain UMN026 / ExPEC), this protein is tRNA 2-selenouridine synthase.